A 342-amino-acid polypeptide reads, in one-letter code: CMP-N-acetylneuraminate-beta-galactosamide-alpha-2,3-sialyltransferase 1 (342 aa).

At 1 to 10 the chain is on the cytoplasmic side; that stretch reads MVTVRKRNVK. The chain crosses the membrane as a helical; Signal-anchor for type II membrane protein span at residues 11–28; that stretch reads VFTFAFVLITVTSFLLNY. Residues 29–342 lie on the Lumenal side of the membrane; the sequence is KHQVTMTTWD…IEKIKFFKGR (314 aa). 3 cysteine pairs are disulfide-bonded: cysteine 61–cysteine 66, cysteine 63–cysteine 141, and cysteine 144–cysteine 283. Asparagine 81 is a glycosylation site (N-linked (GlcNAc...) asparagine). Glutamine 107 serves as a coordination point for substrate. N-linked (GlcNAc...) asparagine glycosylation occurs at asparagine 116. Asparagine 149 and asparagine 172 together coordinate substrate. Residues asparagine 203 and asparagine 229 are each glycosylated (N-linked (GlcNAc...) asparagine). 5 residues coordinate substrate: tyrosine 232, tyrosine 268, glycine 272, glycine 292, and histidine 301. Asparagine 306 carries an N-linked (GlcNAc...) asparagine glycan. Histidine 318 provides a ligand contact to substrate. Asparagine 325 carries N-linked (GlcNAc...) asparagine glycosylation.

Belongs to the glycosyltransferase 29 family. The soluble form derives from the membrane form by proteolytic processing.

It is found in the golgi apparatus. It localises to the golgi stack membrane. The protein localises to the secreted. The enzyme catalyses a beta-D-galactosyl-(1-&gt;3)-N-acetyl-alpha-D-galactosaminyl derivative + CMP-N-acetyl-beta-neuraminate = an N-acetyl-alpha-neuraminyl-(2-&gt;3)-beta-D-galactosyl-(1-&gt;3)-N-acetyl-alpha-D-galactosaminyl derivative + CMP + H(+). The protein operates within protein modification; protein glycosylation. In terms of biological role, responsible for the synthesis of the sequence NeuAc-alpha-2,3-Gal-beta-1,3-GalNAc- found on sugar chains O-linked to Thr or Ser and also as a terminal sequence on certain gangliosides. SIAT4A and SIAT4B sialylate the same acceptor substrates but exhibit different Km values. This chain is CMP-N-acetylneuraminate-beta-galactosamide-alpha-2,3-sialyltransferase 1 (ST3GAL1), found in Gallus gallus (Chicken).